The primary structure comprises 301 residues: Ribosomal RNA small subunit methyltransferase H (301 aa).

Residues 35–37 (GGH), aspartate 55, phenylalanine 84, aspartate 105, and glutamine 112 each bind S-adenosyl-L-methionine.

The protein belongs to the methyltransferase superfamily. RsmH family.

It is found in the cytoplasm. It carries out the reaction cytidine(1402) in 16S rRNA + S-adenosyl-L-methionine = N(4)-methylcytidine(1402) in 16S rRNA + S-adenosyl-L-homocysteine + H(+). Functionally, specifically methylates the N4 position of cytidine in position 1402 (C1402) of 16S rRNA. The protein is Ribosomal RNA small subunit methyltransferase H of Chloroflexus aurantiacus (strain ATCC 29366 / DSM 635 / J-10-fl).